A 271-amino-acid polypeptide reads, in one-letter code: Large ribosomal subunit protein eL8 (271 aa).

The protein belongs to the eukaryotic ribosomal protein eL8 family.

The polypeptide is Large ribosomal subunit protein eL8 (RpL7A) (Drosophila melanogaster (Fruit fly)).